We begin with the raw amino-acid sequence, 1411 residues long: ATP-dependent permease PDR11 (1411 aa).

Topologically, residues 2-388 (SLSKYFNPIP…IGDRNYLISQ (387 aa)) are cytoplasmic. One can recognise an ABC transporter 1 domain in the interval 31 to 273 (VQNDEESASE…FHDTLQIKKN (243 aa)). The helical transmembrane segment at 389-409 (FVSVVVQSLVIGSLFYNIPLT) threads the bilayer. Topologically, residues 410–418 (TIGSFSRGS) are extracellular. Residues 419-439 (LTFFSILFFTFLSLADMPASF) traverse the membrane as a helical segment. The Cytoplasmic portion of the chain corresponds to 440 to 471 (QRQPVVRKHVQLHFYYNWVETLATNFFDCCSK). Residues 472 to 492 (FILVVIFTIILYFLAHLQYNA) form a helical membrane-spanning segment. Topologically, residues 493-494 (AR) are extracellular. A helical transmembrane segment spans residues 495–515 (FFIFLLFLSVYNFCMVSLFAL). Residues 516-524 (TALIAPTLS) are Cytoplasmic-facing. A helical transmembrane segment spans residues 525-545 (MANLLAGILLLAIAMYASYVI). Topologically, residues 546–636 (YMKDMHPWFI…YTYHHVWRNF (91 aa)) are extracellular. Residue Asn-595 is glycosylated (N-linked (GlcNAc...) asparagine). The helical transmembrane segment at 637–657 (GIIIGFLCFFLFCSLLAAEYI) threads the bilayer. At 658–1090 (TPLFTRENLL…QYICTKRDMT (433 aa)) the chain is on the cytoplasmic side. The 229-residue stretch at 751–979 (ISWKNINYTI…FVAHDRRLTF (229 aa)) folds into the ABC transporter 2 domain. 782-789 (GESGAGKT) contributes to the ATP binding site. A helical membrane pass occupies residues 1091 to 1111 (YVFAKYALNAGAGLFIGFSFW). The Extracellular portion of the chain corresponds to 1112–1117 (RTKHNI). Residues 1118–1138 (NGLQDAIFLCFMMLCVSSPLI) traverse the membrane as a helical segment. At 1139 to 1175 (NQVQDKALQSKEVYIAREARSNTYHWTVLLIAQTIVE) the chain is on the cytoplasmic side. A helical transmembrane segment spans residues 1176–1196 (LPLAISSSTLFFLCCYFCCGF). Over 1197-1204 (ETSARVAG) the chain is Extracellular. Residues 1205–1225 (VFYLNYILFSMYYLSFGLWLL) traverse the membrane as a helical segment. The Cytoplasmic portion of the chain corresponds to 1226–1230 (YSAPD). The helical transmembrane segment at 1231–1251 (LQTAAVFVAFLYSFTASFCGV) threads the bilayer. Over 1252–1355 (MQPYSLFPRF…NMSYHHRWRN (104 aa)) the chain is Extracellular. N-linked (GlcNAc...) asparagine glycans are attached at residues Asn-1289, Asn-1324, and Asn-1346. Residues 1356-1376 (FGFEWVFVCFNIAAMFVGFYL) form a helical membrane-spanning segment. Topologically, residues 1377–1411 (TYIKKIWPSVIDGIKKCIPSMRRSKTSHNPNEQSV) are cytoplasmic.

Belongs to the ABC transporter superfamily. ABCG family. PDR (TC 3.A.1.205) subfamily.

The protein localises to the membrane. Its function is as follows. Transporter involved in the uptake of sterol. In Saccharomyces cerevisiae (strain ATCC 204508 / S288c) (Baker's yeast), this protein is ATP-dependent permease PDR11 (PDR11).